Here is a 400-residue protein sequence, read N- to C-terminus: Flavo-diiron protein FprA2 (400 aa).

The segment at 32-216 (GTSYNAYLIK…VVKGLDILDA (185 aa)) is zinc metallo-hydrolase. The Fe cation site is built by His79, Glu81, Asp83, His147, Asp166, and His226. Residues 257-397 (IPIFYCSAYG…KAFKFGEDFA (141 aa)) enclose the Flavodoxin-like domain. Residues 263–267 (SAYGN) and 345–372 (AFGS…KVFQ) each bind FMN.

This sequence in the N-terminal section; belongs to the zinc metallo-hydrolase group 3 family. As to quaternary structure, homotetramer. FMN is required as a cofactor. It depends on Fe cation as a cofactor.

The enzyme catalyses 2 NADH + O2 + 2 H(+) = 2 NAD(+) + 2 H2O. Functionally, catalyzes the four-electron reduction of molecular oxygen to water. In fact, functions as the terminal component of an NADH oxidase (NADH:O(2) oxidoreductase) when using NADH:rubredoxin oxidoreductase (NROR) and rubredoxin (Rd) as electron transport intermediaries between NADH and FDP. Is thus able to reductively scavenge intracellular dioxygen and is part of an oxidative stress defense system in C.acetobutylicum, an obligate anaerobic bacterium. Can also serve as the terminal component of an NADH:nitric oxide oxidoreductase (NOR) with a catalytic efficiency comparable to that of its NADH oxidase activity, and therefore might have an in vivo role in scavenging nitric oxide. This is Flavo-diiron protein FprA2 (fprA2) from Clostridium acetobutylicum (strain ATCC 824 / DSM 792 / JCM 1419 / IAM 19013 / LMG 5710 / NBRC 13948 / NRRL B-527 / VKM B-1787 / 2291 / W).